The sequence spans 991 residues: Seizure protein 6 (991 aa).

An N-terminal signal peptide occupies residues 1 to 19; that stretch reads MRPAALLLLPSLLALLAHG. At 20 to 922 the chain is on the extracellular side; the sequence is LSSEAPITGE…AASSALDAAH (903 aa). Residues 79 to 193 form a disordered region; it reads EGLEREEAPQ…QEGPGDMDRP (115 aa). Low complexity predominate over residues 119 to 132; the sequence is TSPTPAVAAAPTQP. Residues 175–184 are compositionally biased toward polar residues; it reads PPSQAWTPTQ. The cysteines at positions 241 and 268 are disulfide-linked. Residues 241-353 enclose the CUB 1 domain; sequence CSWNFSGPEG…HFRYQAYLLS (113 aa). N-linked (GlcNAc...) asparagine glycosylation occurs at asparagine 286. Positions 352–411 constitute a Sushi 1 domain; that stretch reads LSCHFPRRPAYGDVTVTSLHPGGSAHFHCATGYQLKGARFLTCLNATQPFWDSQEPVCIA. Cystine bridges form between cysteine 354/cysteine 394, cysteine 380/cysteine 409, cysteine 413/cysteine 440, cysteine 529/cysteine 571, cysteine 556/cysteine 586, cysteine 590/cysteine 616, cysteine 707/cysteine 749, cysteine 735/cysteine 762, cysteine 768/cysteine 810, cysteine 796/cysteine 827, cysteine 835/cysteine 877, and cysteine 863/cysteine 892. N-linked (GlcNAc...) asparagine glycans are attached at residues asparagine 396, asparagine 433, and asparagine 538. The CUB 2 domain maps to 413–524; that stretch reads CGGVIRNATT…AGMALRYEAF (112 aa). Residues 527-588 enclose the Sushi 2 domain; it reads GHCYEPFVKY…WNETEPACRA (62 aa). The CUB 3 domain maps to 590-701; it reads CSGEITDSAG…QGFVIHFFEV (112 aa). Sushi domains are found at residues 705 to 764, 766 to 829, and 833 to 894; these read DTCP…SCQR, TSCH…KCLL, and KPCH…ICRA. Residues 923-943 form a helical membrane-spanning segment; that stretch reads LAAAIFLPLVAMVLLVGGVYL. Residues 944–991 lie on the Cytoplasmic side of the membrane; sequence YFSRFQGKSPLQLPRTHPRPYNRITVESAFDNPTYETGSLSFAGDERI.

The protein belongs to the SEZ6 family. In terms of processing, glycosylated. Brain-specific. Expressed in extrasynaptic and synaptic subcellular fractions (at protein level). Expression correlates with the most active periods of cortical neurogenesis and neuronal maturation. Expression is restricted to the gray matter with higher levels in the forebrain including the olfactory bulb, anterior olfactory nuclei, olfactory tubercle, striatum, hippocampal CA1 pyramidal cell layer and cerebral cortex. Expression is up-regulated with the convulsant drug, pentylenetetrazole.

It localises to the cell membrane. The protein resides in the cell projection. It is found in the dendrite. Its subcellular location is the synapse. The protein localises to the secreted. It localises to the cytoplasm. Its function is as follows. May play a role in cell-cell recognition and in neuronal membrane signaling. Seems to be important for the achievement of the necessary balance between dendrite elongation and branching during the elaboration of a complex dendritic arbor. Involved in the development of appropriate excitatory synaptic connectivity. This Mus musculus (Mouse) protein is Seizure protein 6 (Sez6).